The sequence spans 55 residues: Large ribosomal subunit protein bL33 (55 aa).

The protein belongs to the bacterial ribosomal protein bL33 family.

This Leifsonia xyli subsp. xyli (strain CTCB07) protein is Large ribosomal subunit protein bL33.